The chain runs to 627 residues: uncharacterized protein (627 aa).

2 disordered regions span residues 141 to 187 (LRYP…TPPS) and 490 to 510 (ENENTNGSANNSTYTNGGPRT). The segment covering 491–510 (NENTNGSANNSTYTNGGPRT) has biased composition (polar residues). Position 559 is a phosphoserine (S559).

This is an uncharacterized protein from Saccharomyces cerevisiae (strain ATCC 204508 / S288c) (Baker's yeast).